We begin with the raw amino-acid sequence, 95 residues long: Protein TusB (95 aa).

Belongs to the DsrH/TusB family. Heterohexamer, formed by a dimer of trimers. The hexameric TusBCD complex contains 2 copies each of TusB, TusC and TusD. The TusBCD complex interacts with TusE.

It is found in the cytoplasm. Its function is as follows. Part of a sulfur-relay system required for 2-thiolation of 5-methylaminomethyl-2-thiouridine (mnm(5)s(2)U) at tRNA wobble positions. In Pectobacterium parmentieri, this protein is Protein TusB.